A 712-amino-acid polypeptide reads, in one-letter code: Serrate RNA effector molecule homolog (712 aa).

Disordered regions lie at residues methionine 1–tyrosine 80, alanine 214–serine 256, and glutamine 620–proline 712. Basic and acidic residues-rich tracts occupy residues glycine 8 to arginine 26 and tyrosine 34 to aspartate 54. A compositionally biased stretch (polar residues) spans arginine 65–isoleucine 79. Positions alanine 214–glutamine 236 are enriched in basic and acidic residues. Residues alanine 240–aspartate 251 show a composition bias toward acidic residues. 2 stretches are compositionally biased toward basic and acidic residues: residues arginine 621–glycine 637 and glycine 645–glycine 655. Over residues proline 656 to glycine 668 the composition is skewed to gly residues.

It belongs to the ARS2 family.

The protein localises to the nucleus. Functionally, acts as a mediator between the cap-binding complex (CBC) and the primary microRNAs (miRNAs) processing machinery. Contributes to the stability and delivery of capped primary miRNA transcripts to the primary miRNA processing complex, thereby playing a role in RNA-mediated gene silencing (RNAi) by miRNAs. This is Serrate RNA effector molecule homolog from Caenorhabditis elegans.